The following is a 583-amino-acid chain: Cysteine/serine-rich nuclear protein 1 (583 aa).

Disordered stretches follow at residues 1-79 and 306-381; these read MTGL…APRE and AESL…RSGV. The span at 18–41 shows a compositional bias: low complexity; it reads SSSSSSSFSSRLSLSSFPASSASP. A compositionally biased stretch (polar residues) spans 54–69; that stretch reads APQSDQDSCGLQSFTP. The span at 335 to 361 shows a compositional bias: low complexity; that stretch reads PVSSELGDSSCSSDMTDSSTTLSSGSS. A compositionally biased stretch (pro residues) spans 364–373; sequence PNHPAHPSLP.

Belongs to the AXUD1 family. Widely expressed with highest levels in thymus and lung. Low levels detected in naive T-cells.

Its subcellular location is the nucleus. In terms of biological role, binds to the consensus sequence 5'-AGAGTG-3' and has transcriptional activator activity. May have a tumor-suppressor function. May play a role in apoptosis. This is Cysteine/serine-rich nuclear protein 1 (Csrnp1) from Mus musculus (Mouse).